A 274-amino-acid chain; its full sequence is 2,3,4,5-tetrahydropyridine-2,6-dicarboxylate N-succinyltransferase (274 aa).

Substrate-binding residues include arginine 104 and aspartate 141.

This sequence belongs to the transferase hexapeptide repeat family. As to quaternary structure, homotrimer.

It localises to the cytoplasm. It carries out the reaction (S)-2,3,4,5-tetrahydrodipicolinate + succinyl-CoA + H2O = (S)-2-succinylamino-6-oxoheptanedioate + CoA. Its pathway is amino-acid biosynthesis; L-lysine biosynthesis via DAP pathway; LL-2,6-diaminopimelate from (S)-tetrahydrodipicolinate (succinylase route): step 1/3. The polypeptide is 2,3,4,5-tetrahydropyridine-2,6-dicarboxylate N-succinyltransferase (Yersinia pestis).